A 171-amino-acid polypeptide reads, in one-letter code: Adenine phosphoribosyltransferase (171 aa).

The protein belongs to the purine/pyrimidine phosphoribosyltransferase family. As to quaternary structure, homodimer.

The protein resides in the cytoplasm. The enzyme catalyses AMP + diphosphate = 5-phospho-alpha-D-ribose 1-diphosphate + adenine. The protein operates within purine metabolism; AMP biosynthesis via salvage pathway; AMP from adenine: step 1/1. In terms of biological role, catalyzes a salvage reaction resulting in the formation of AMP, that is energically less costly than de novo synthesis. This is Adenine phosphoribosyltransferase from Ruminiclostridium cellulolyticum (strain ATCC 35319 / DSM 5812 / JCM 6584 / H10) (Clostridium cellulolyticum).